The following is a 112-amino-acid chain: U-scoloptoxin(16)-Er5a (112 aa).

A signal peptide spans 1–26 (MNTVSVVQFLAVGCAVFVLYGRGVFA).

It belongs to the scoloptoxin-16 family. Post-translationally, contains 2 disulfide bonds. In terms of tissue distribution, expressed by the venom gland.

Its subcellular location is the secreted. This chain is U-scoloptoxin(16)-Er5a, found in Ethmostigmus rubripes (Giant centipede).